A 783-amino-acid polypeptide reads, in one-letter code: NADH-quinone oxidoreductase subunit 3 (783 aa).

Residues 1 to 99 (MVRVKVNDRI…GMVVDTLSDV (99 aa)) enclose the 2Fe-2S ferredoxin-type domain. Positions 34, 45, 48, and 83 each coordinate [2Fe-2S] cluster. In terms of domain architecture, 4Fe-4S His(Cys)3-ligated-type spans 99 to 138 (VVREAQAGMVEFTLLNHPLDCPTCDKGGACELQDRTVEYG). Residues His115, Cys119, Cys122, Cys128, Cys181, Cys184, Cys187, Cys230, Cys256, Cys259, Cys263, and Cys291 each coordinate [4Fe-4S] cluster. One can recognise a 4Fe-4S Mo/W bis-MGD-type domain in the interval 249–305 (MEETPTTCALCPVGCGITADTRSGELLRIRAREVPEVNEIWICDAGRFGHEWADQNR).

The protein belongs to the complex I 75 kDa subunit family. In terms of assembly, NDH-1 is composed of 15 different subunits, Nqo1 to Nqo15. The complex has a L-shaped structure, with the hydrophobic arm (subunits Nqo7, Nqo8 and Nqo10 to Nqo14) embedded in the membrane and the hydrophilic peripheral arm (subunits Nqo1 to Nqo6, Nqo9 and Nqo15) protruding into the bacterial cytoplasm. The hydrophilic domain contains all the redox centers. [2Fe-2S] cluster is required as a cofactor. Requires [4Fe-4S] cluster as cofactor.

Its subcellular location is the cell membrane. The enzyme catalyses a quinone + NADH + 5 H(+)(in) = a quinol + NAD(+) + 4 H(+)(out). NDH-1 shuttles electrons from NADH, via FMN and iron-sulfur (Fe-S) centers, to quinones in the respiratory chain. The immediate electron acceptor for the enzyme in this species is menaquinone. Couples the redox reaction to proton translocation (for every two electrons transferred, four hydrogen ions are translocated across the cytoplasmic membrane), and thus conserves the redox energy in a proton gradient required for the synthesis of ATP. This Thermus thermophilus (strain ATCC 27634 / DSM 579 / HB8) protein is NADH-quinone oxidoreductase subunit 3 (nqo3).